Reading from the N-terminus, the 360-residue chain is Phospho-N-acetylmuramoyl-pentapeptide-transferase (360 aa).

A run of 10 helical transmembrane segments spans residues 21–41 (YITFRAIMALLTAMGIGLWIG), 73–93 (TMGGIMILIAIGVSTLLWADL), 98–118 (VWFVLFVLFGYGAVGFVDDYW), 132–152 (WKYFWLSVIALIAVFGIYAVG), 168–188 (FMPQLGIFFIILSYFVIVGTS), 199–219 (GLAIVPTIMVASAFALIAWAT), 236–256 (AGELVILCTAIVGAGLGFLWY), 263–283 (VFMGDVGSLSLGGALGTIAVL), 288–308 (LLLVIMGGVFVVEALSVILQV), and 338–358 (VIVRFWIITLMLVLIGLVTLK).

It belongs to the glycosyltransferase 4 family. MraY subfamily. The cofactor is Mg(2+).

The protein localises to the cell inner membrane. The catalysed reaction is UDP-N-acetyl-alpha-D-muramoyl-L-alanyl-gamma-D-glutamyl-meso-2,6-diaminopimeloyl-D-alanyl-D-alanine + di-trans,octa-cis-undecaprenyl phosphate = di-trans,octa-cis-undecaprenyl diphospho-N-acetyl-alpha-D-muramoyl-L-alanyl-D-glutamyl-meso-2,6-diaminopimeloyl-D-alanyl-D-alanine + UMP. It participates in cell wall biogenesis; peptidoglycan biosynthesis. Functionally, catalyzes the initial step of the lipid cycle reactions in the biosynthesis of the cell wall peptidoglycan: transfers peptidoglycan precursor phospho-MurNAc-pentapeptide from UDP-MurNAc-pentapeptide onto the lipid carrier undecaprenyl phosphate, yielding undecaprenyl-pyrophosphoryl-MurNAc-pentapeptide, known as lipid I. The chain is Phospho-N-acetylmuramoyl-pentapeptide-transferase from Actinobacillus pleuropneumoniae serotype 3 (strain JL03).